Here is a 424-residue protein sequence, read N- to C-terminus: GTPase Obg (424 aa).

The Obg domain maps to 1–158; it reads MFYDQAKIYV…RNLLLELKLL (158 aa). An OBG-type G domain is found at 159–329; it reads ADVGLVGFPN…LVYAAAKALP (171 aa). GTP is bound by residues 165–172, 190–194, 212–215, 282–285, and 310–312; these read GFPNVGKS, FTTLV, DIPG, NKMD, and SAA. 2 residues coordinate Mg(2+): Ser-172 and Thr-192. The OCT domain occupies 347-424; it reads TQASAPHRFE…IAGIEFEWEE (78 aa).

It belongs to the TRAFAC class OBG-HflX-like GTPase superfamily. OBG GTPase family. In terms of assembly, monomer. Requires Mg(2+) as cofactor.

It localises to the cytoplasm. In terms of biological role, an essential GTPase which binds GTP, GDP and possibly (p)ppGpp with moderate affinity, with high nucleotide exchange rates and a fairly low GTP hydrolysis rate. Plays a role in control of the cell cycle, stress response, ribosome biogenesis and in those bacteria that undergo differentiation, in morphogenesis control. The chain is GTPase Obg from Desulfitobacterium hafniense (strain Y51).